A 172-amino-acid chain; its full sequence is Large ribosomal subunit protein uL10 (172 aa).

It belongs to the universal ribosomal protein uL10 family. In terms of assembly, part of the ribosomal stalk of the 50S ribosomal subunit. The N-terminus interacts with L11 and the large rRNA to form the base of the stalk. The C-terminus forms an elongated spine to which L12 dimers bind in a sequential fashion forming a multimeric L10(L12)X complex.

Its function is as follows. Forms part of the ribosomal stalk, playing a central role in the interaction of the ribosome with GTP-bound translation factors. In Xanthobacter autotrophicus (strain ATCC BAA-1158 / Py2), this protein is Large ribosomal subunit protein uL10.